The primary structure comprises 320 residues: Probable protein adenylyltransferase aq_aa38 (320 aa).

Positions Val-76–Arg-206 constitute a Fido domain. Residues Lys-100–Ser-101, Gly-157–Gly-159, and Arg-163 each bind ATP.

Belongs to the fic family.

It catalyses the reaction L-tyrosyl-[protein] + ATP = O-(5'-adenylyl)-L-tyrosyl-[protein] + diphosphate. It carries out the reaction L-threonyl-[protein] + ATP = 3-O-(5'-adenylyl)-L-threonyl-[protein] + diphosphate. Probable adenylyltransferase that mediates the addition of adenosine 5'-monophosphate (AMP) to specific residues of target proteins. In Aquifex aeolicus (strain VF5), this protein is Probable protein adenylyltransferase aq_aa38.